Here is a 460-residue protein sequence, read N- to C-terminus: Exodeoxyribonuclease 7 large subunit (460 aa).

Residues 438–460 (ARVEKVNREEEKQSGSQKNGTRD) form a disordered region. Residues 439-450 (RVEKVNREEEKQ) are compositionally biased toward basic and acidic residues. The segment covering 451–460 (SGSQKNGTRD) has biased composition (polar residues).

This sequence belongs to the XseA family. In terms of assembly, heterooligomer composed of large and small subunits.

It localises to the cytoplasm. The enzyme catalyses Exonucleolytic cleavage in either 5'- to 3'- or 3'- to 5'-direction to yield nucleoside 5'-phosphates.. Bidirectionally degrades single-stranded DNA into large acid-insoluble oligonucleotides, which are then degraded further into small acid-soluble oligonucleotides. This is Exodeoxyribonuclease 7 large subunit from Brevibacillus brevis (strain 47 / JCM 6285 / NBRC 100599).